A 382-amino-acid polypeptide reads, in one-letter code: uncharacterized protein (382 aa).

Transmembrane regions (helical) follow at residues 14–34 (GLLL…LWLA), 45–65 (MVSS…GYLI), 75–95 (YLAS…VGFW), 102–122 (FIAG…LMCS), 131–151 (LLAA…LLVS), 157–177 (LLHV…PLLF), 204–224 (LGVN…GLMP), 235–255 (ASIG…QWPV), 265–284 (LLVL…VMLT), 289–311 (APAL…AWAC), 325–345 (ALLL…AMLM), and 349–369 (SDNL…LMLL).

Belongs to the major facilitator superfamily. YcaD (TC 2.A.1.26) family.

Its subcellular location is the cell inner membrane. This is an uncharacterized protein from Salmonella arizonae (strain ATCC BAA-731 / CDC346-86 / RSK2980).